The chain runs to 101 residues: Small ribosomal subunit protein bS18c (101 aa).

This sequence belongs to the bacterial ribosomal protein bS18 family. In terms of assembly, part of the 30S ribosomal subunit.

Its subcellular location is the plastid. The protein resides in the chloroplast. This is Small ribosomal subunit protein bS18c from Carica papaya (Papaya).